The chain runs to 593 residues: CTD kinase subunit alpha (593 aa).

2 stretches are compositionally biased toward polar residues: residues 1 to 17 (MSYS…TEPN) and 29 to 51 (QLSG…FKNN). Positions 1 to 262 (MSYSKSTIYR…ESVPAPLPSP (262 aa)) are disordered. Phosphoserine occurs at positions 56 and 58. Residues 90–103 (RSRKSRRRKGKKAF) are compositionally biased toward basic residues. 2 positions are modified to phosphoserine: Ser104 and Ser109. The span at 139–152 (SSSSASVSPISPSA) shows a compositional bias: low complexity. Residues 160-170 (QASSFRRSPPS) are compositionally biased toward polar residues. A compositionally biased stretch (low complexity) spans 198 to 215 (IPHETTSSDTQKKSSVSS). A Protein kinase domain is found at 277–561 (YEKIDQIGEG…AHETLMHEYF (285 aa)). Residues 283–291 (IGEGTYGKV) and Lys306 each bind ATP. Asp399 (proton acceptor) is an active-site residue.

This sequence belongs to the protein kinase superfamily. CMGC Ser/Thr protein kinase family. CDC2/CDKX subfamily. As to quaternary structure, CTDK-I consists of three subunits, ctk1/lsk1, ctk2/lsc1 and ctk3 (also called alpha, beta and gamma). Interacts with ctk2/lsc1. This interaction is dependent on kinase activity.

It is found in the nucleus. The protein localises to the nucleolus. The enzyme catalyses [DNA-directed RNA polymerase] + ATP = phospho-[DNA-directed RNA polymerase] + ADP + H(+). In terms of biological role, catalytic subunit of the CTDK-I complex, which hyperphosphorylates the C-terminal heptapeptide repeat domain (CTD) of the largest RNA polymerase II subunit. Involved in RNA polymerase II transcriptional elongation and pre-mRNA 3'-end processing. Together with ctk2/lsc1, required for the regulation of cytokinesis by phosphorylating 'Ser-2' residues found in the heptad repeats of the CTD. Required for nuclear localization of ctk2/lsc1. Positively regulates the septation initiation network (SIN) and promotes successful completion of cytokinesis in response to perturbation of the actomyosin ring. Acts in parallel to clp1 to promote actomyosin ring stability upon cytokinesis checkpoint activation. The sequence is that of CTD kinase subunit alpha from Schizosaccharomyces pombe (strain 972 / ATCC 24843) (Fission yeast).